The chain runs to 250 residues: UDP-2,3-diacylglucosamine hydrolase (250 aa).

Positions 8, 10, 41, 79, and 115 each coordinate Mn(2+). A substrate-binding site is contributed by N79–H80. Positions 123, 165, 168, and 196 each coordinate substrate. Mn(2+) contacts are provided by H196 and H198.

Belongs to the LpxH family. It depends on Mn(2+) as a cofactor.

It localises to the cell inner membrane. It carries out the reaction UDP-2-N,3-O-bis[(3R)-3-hydroxytetradecanoyl]-alpha-D-glucosamine + H2O = 2-N,3-O-bis[(3R)-3-hydroxytetradecanoyl]-alpha-D-glucosaminyl 1-phosphate + UMP + 2 H(+). Its pathway is glycolipid biosynthesis; lipid IV(A) biosynthesis; lipid IV(A) from (3R)-3-hydroxytetradecanoyl-[acyl-carrier-protein] and UDP-N-acetyl-alpha-D-glucosamine: step 4/6. Hydrolyzes the pyrophosphate bond of UDP-2,3-diacylglucosamine to yield 2,3-diacylglucosamine 1-phosphate (lipid X) and UMP by catalyzing the attack of water at the alpha-P atom. Involved in the biosynthesis of lipid A, a phosphorylated glycolipid that anchors the lipopolysaccharide to the outer membrane of the cell. The chain is UDP-2,3-diacylglucosamine hydrolase from Blochmanniella pennsylvanica (strain BPEN).